We begin with the raw amino-acid sequence, 445 residues long: Rab GDP dissociation inhibitor beta (445 aa).

At M1 the chain carries N-acetylmethionine. Position 57 is an N6-succinyllysine (K57). The residue at position 61 (S61) is a Phosphoserine. K112 is modified (N6-acetyllysine). Residue S130 is modified to Phosphoserine. Residue K269 is modified to N6-acetyllysine. Position 382 is a phosphoserine (S382).

It belongs to the Rab GDI family. In terms of assembly, interacts with RHOH. Interacts with the GDP-bound inactive forms of RAB3A, RAB3B, RAB3C, RAB5A, RAB5B, RAB5C, RAB8A, RAB8B, RAB10, RAB12, RAB35, and RAB43; binds RAB3D to a lesser extent. Interacts with DZIP1; this interaction negatively regulates the interaction of GDI2 with GDP-bound RAB8A. Ubiquitous.

The protein resides in the cytoplasm. The protein localises to the membrane. Its subcellular location is the golgi apparatus. It is found in the trans-Golgi network. In terms of biological role, GDP-dissociation inhibitor preventing the GDP to GTP exchange of most Rab proteins. By keeping these small GTPases in their inactive GDP-bound form regulates intracellular membrane trafficking. Negatively regulates protein transport to the cilium and ciliogenesis through the inhibition of RAB8A. This chain is Rab GDP dissociation inhibitor beta (GDI2), found in Homo sapiens (Human).